Here is a 307-residue protein sequence, read N- to C-terminus: UDP-N-acetylenolpyruvoylglucosamine reductase (307 aa).

An FAD-binding PCMH-type domain is found at 34–197; it reads VGGNAEALFR…LSASLKGRPG (164 aa). Residue arginine 177 is part of the active site. The Proton donor role is filled by serine 226. Glutamate 296 is an active-site residue.

This sequence belongs to the MurB family. FAD serves as cofactor.

The protein localises to the cytoplasm. The enzyme catalyses UDP-N-acetyl-alpha-D-muramate + NADP(+) = UDP-N-acetyl-3-O-(1-carboxyvinyl)-alpha-D-glucosamine + NADPH + H(+). Its pathway is cell wall biogenesis; peptidoglycan biosynthesis. Functionally, cell wall formation. The protein is UDP-N-acetylenolpyruvoylglucosamine reductase of Paramagnetospirillum magneticum (strain ATCC 700264 / AMB-1) (Magnetospirillum magneticum).